The chain runs to 447 residues: Ameloblastin (447 aa).

The N-terminal stretch at Met-1 to Ala-26 is a signal peptide. Pro-37 is subject to Hydroxyproline. Position 43 is a phosphoserine (Ser-43). O-linked (GalNAc...) serine glycosylation occurs at Ser-112. Disordered stretches follow at residues Gln-165–Asp-211, Asp-307–Asn-338, and Leu-353–Ala-383. 2 tandem repeats follow at residues Pro-189–Gly-201 and Pro-202–Gly-214.

The protein belongs to the ameloblastin family. In terms of tissue distribution, ameloblast-specific. Located at the Tomes processes of secretory ameloblasts and in the sheath space between rod-interrod enamel.

Its subcellular location is the secreted. The protein localises to the extracellular space. It is found in the extracellular matrix. Involved in the mineralization and structural organization of enamel. This Homo sapiens (Human) protein is Ameloblastin (AMBN).